Here is an 89-residue protein sequence, read N- to C-terminus: UPF0237 protein lin0537 (89 aa).

Residues 4-78 (VLTVIGKDNV…EELQVKIHIQ (75 aa)) enclose the ACT domain.

The protein belongs to the UPF0237 family.

This Listeria innocua serovar 6a (strain ATCC BAA-680 / CLIP 11262) protein is UPF0237 protein lin0537.